A 155-amino-acid chain; its full sequence is Nascent polypeptide-associated complex subunit beta (155 aa).

Disordered regions lie at residues 1 to 35 (MDQA…SGAD) and 116 to 155 (LAES…SNVE). Residues 20–30 (TPRRKVKKVHK) show a composition bias toward basic residues. Residues 33-98 (GADDKKLQAT…GEEKELTELV (66 aa)) form the NAC-A/B domain. Positions 136–155 (DEEDDIPDLVEGENFESNVE) are enriched in acidic residues.

This sequence belongs to the NAC-beta family. As to quaternary structure, part of the nascent polypeptide-associated complex (NAC), consisting of egd2 and egd1. NAC associates with ribosomes via egd1.

The protein resides in the cytoplasm. Its subcellular location is the nucleus. Its function is as follows. Component of the nascent polypeptide-associated complex (NAC), a dynamic component of the ribosomal exit tunnel, protecting the emerging polypeptides from interaction with other cytoplasmic proteins to ensure appropriate nascent protein targeting. The NAC complex also promotes mitochondrial protein import by enhancing productive ribosome interactions with the outer mitochondrial membrane and blocks the inappropriate interaction of ribosomes translating non-secretory nascent polypeptides with translocation sites in the membrane of the endoplasmic reticulum. EGD1 may act as a transcription factor that exert a negative effect on the expression of several genes that are transcribed by RNA polymerase II. In Aspergillus niger (strain ATCC MYA-4892 / CBS 513.88 / FGSC A1513), this protein is Nascent polypeptide-associated complex subunit beta (egd1).